The primary structure comprises 569 residues: Intraflagellar transport protein 74/72 (569 aa).

3 coiled-coil regions span residues 75–156 (ITAT…TRNE), 201–231 (YRSLNDENITLKQKESELRKELQEAAAVAAN), and 271–298 (AITLHRQIRAAKRELDAYKAKIKAAESH).

It belongs to the IFT74 family.

The protein resides in the cell projection. It localises to the cilium. It is found in the flagellum. Its subcellular location is the cytoplasm. The protein localises to the cytoskeleton. The protein resides in the flagellum axoneme. It localises to the flagellum basal body. Its function is as follows. Component of the intraflagellar transport complex B (IFT-B) involved in flagellar assembly. This Giardia intestinalis (strain ATCC 50803 / WB clone C6) (Giardia lamblia) protein is Intraflagellar transport protein 74/72.